The primary structure comprises 152 residues: MTVTDIVLVLFIVALLAYAFYDEFIMPRRNGETLLAVPLLRRGRVDAFIFAGLLAILIYNNVMSQGALLTTWLLCVLALMAFYLFWIRAPKIIFKSHGFFFANIWIEYNRIKEMNLSEDGVLVIQLEQRRLLVRVKNIDDLEKIYKIMVKTQ.

The next 3 membrane-spanning stretches (helical) occupy residues 6–26, 45–65, and 67–87; these read IVLV…EFIM, VDAF…VMSQ, and ALLT…LFWI.

The protein belongs to the UPF0266 family.

It localises to the cell inner membrane. The sequence is that of UPF0266 membrane protein Ent638_2389 from Enterobacter sp. (strain 638).